The chain runs to 620 residues: Ran-binding protein 10 (620 aa).

A disordered region spans residues M1 to E34. An N-acetylalanine modification is found at A2. The B30.2/SPRY domain occupies L35 to F222. The LisH domain maps to W253–I285. The region spanning S291 to V348 is the CTLH domain. A compositionally biased stretch (polar residues) spans E347 to S398. The tract at residues E347–A459 is disordered. Residue S361 is modified to Phosphoserine. Y362 is subject to Phosphotyrosine. S365, S367, S369, and S422 each carry phosphoserine. A compositionally biased stretch (low complexity) spans S409–S436. Over residues T437 to T450 the composition is skewed to polar residues. S451 and S453 each carry phosphoserine.

The protein belongs to the RANBP9/10 family. In terms of assembly, may form homodimers. Identified in the CTLH complex that contains GID4, RANBP9 and/or RANBP10, MKLN1, MAEA, RMND5A (or alternatively its paralog RMND5B), GID8, ARMC8, WDR26 and YPEL5. Within this complex, MAEA, RMND5A (or alternatively its paralog RMND5B), GID8, WDR26, and RANBP9 and/or RANBP10 form the catalytic core, while GID4, MKLN1, ARMC8 and YPEL5 have ancillary roles. Interacts with RAN and RANBP9. Interacts with the HGF receptor MET. Interacts with AR. Interacts with TUBB1. Interacts with YPEL5. May interact with TUBB5. Interacts with DDX4.

It localises to the cytoplasm. The protein localises to the cytosol. The protein resides in the nucleus. Its function is as follows. May act as an adapter protein to couple membrane receptors to intracellular signaling pathways. Core component of the CTLH E3 ubiquitin-protein ligase complex that selectively accepts ubiquitin from UBE2H and mediates ubiquitination and subsequent proteasomal degradation of the transcription factor HBP1. Enhances dihydrotestosterone-induced transactivation activity of AR, as well as dexamethasone-induced transactivation activity of NR3C1, but does not affect estrogen-induced transactivation. Acts as a guanine nucleotide exchange factor (GEF) for RAN GTPase. May play an essential role in hemostasis and in maintaining microtubule dynamics with respect to both platelet shape and function. This is Ran-binding protein 10 (RANBP10) from Bos taurus (Bovine).